A 376-amino-acid polypeptide reads, in one-letter code: Coatomer subunit delta-4 (376 aa).

Residues 65–92 (LNTDTDTFTSRPKGRTSGGTTGAGKGIG) are disordered. Over residues 80–92 (TSGGTTGAGKGIG) the composition is skewed to gly residues. The region spanning 134-376 (SDPVTVAVEE…RLVADNYQVV (243 aa)) is the MHD domain.

Belongs to the adaptor complexes medium subunit family. Delta-COP subfamily. As to quaternary structure, oligomeric complex that consists of at least the alpha, beta, beta', gamma, delta, epsilon and zeta subunits.

The protein localises to the cytoplasm. Its subcellular location is the golgi apparatus membrane. It localises to the cytoplasmic vesicle. The protein resides in the COPI-coated vesicle membrane. The coatomer is a cytosolic protein complex that binds to dilysine motifs and reversibly associates with Golgi non-clathrin-coated vesicles, which further mediate biosynthetic protein transport from the ER, via the Golgi up to the trans Golgi network. Coatomer complex is required for budding from Golgi membranes, and is essential for the retrograde Golgi-to-ER transport of dilysine-tagged proteins. This is Coatomer subunit delta-4 from Oryza sativa subsp. japonica (Rice).